A 154-amino-acid polypeptide reads, in one-letter code: Homeobox protein engrailed (154 aa).

The homeobox DNA-binding region spans 37 to 96 (EKRPRTAFSASQLQRLKQEFQQSNYLTEQRRRSLAKELTLSESQIKIWFQNKRAKIKKAS). Residues 127–154 (KLLNGQNTSGDCSRSDYTSDSDGDSLTH) form a disordered region. Residues 129-144 (LNGQNTSGDCSRSDYT) show a composition bias toward polar residues. A compositionally biased stretch (acidic residues) spans 145–154 (SDSDGDSLTH).

Belongs to the engrailed homeobox family.

It is found in the nucleus. This Tripneustes gratilla (Hawaian sea urchin) protein is Homeobox protein engrailed (EN).